A 143-amino-acid polypeptide reads, in one-letter code: MLMLRSPFSDSNVLDHFLDEITGSVQFPYWRNADHNSFNFSDNIGEIVNDESKFSVQLDVSHFKPEDLKIELDGRELKIEGIQEKKSEHGYSKRSFSKMILLPEDVDLTSVKSAISNEGKLQIEAPKKTNSSRSIPINFVAKH.

The 106-residue stretch at 35-140 (HNSFNFSDNI…SSRSIPINFV (106 aa)) folds into the sHSP domain.

It belongs to the small heat shock protein (HSP20) family.

This is Heat shock protein Hsp-16.48/Hsp-16.49 (hsp-16.48) from Caenorhabditis elegans.